A 132-amino-acid polypeptide reads, in one-letter code: Small ribosomal subunit protein uS8 (132 aa).

Belongs to the universal ribosomal protein uS8 family. As to quaternary structure, part of the 30S ribosomal subunit. Contacts proteins S5 and S12.

In terms of biological role, one of the primary rRNA binding proteins, it binds directly to 16S rRNA central domain where it helps coordinate assembly of the platform of the 30S subunit. The sequence is that of Small ribosomal subunit protein uS8 from Exiguobacterium sp. (strain ATCC BAA-1283 / AT1b).